We begin with the raw amino-acid sequence, 172 residues long: Crossover junction endodeoxyribonuclease RuvC (172 aa).

Active-site residues include Asp-8, Glu-67, and Asp-139. Residues Asp-8, Glu-67, and Asp-139 each coordinate Mg(2+).

It belongs to the RuvC family. As to quaternary structure, homodimer which binds Holliday junction (HJ) DNA. The HJ becomes 2-fold symmetrical on binding to RuvC with unstacked arms; it has a different conformation from HJ DNA in complex with RuvA. In the full resolvosome a probable DNA-RuvA(4)-RuvB(12)-RuvC(2) complex forms which resolves the HJ. It depends on Mg(2+) as a cofactor.

The protein resides in the cytoplasm. It carries out the reaction Endonucleolytic cleavage at a junction such as a reciprocal single-stranded crossover between two homologous DNA duplexes (Holliday junction).. Functionally, the RuvA-RuvB-RuvC complex processes Holliday junction (HJ) DNA during genetic recombination and DNA repair. Endonuclease that resolves HJ intermediates. Cleaves cruciform DNA by making single-stranded nicks across the HJ at symmetrical positions within the homologous arms, yielding a 5'-phosphate and a 3'-hydroxyl group; requires a central core of homology in the junction. The consensus cleavage sequence is 5'-(A/T)TT(C/G)-3'. Cleavage occurs on the 3'-side of the TT dinucleotide at the point of strand exchange. HJ branch migration catalyzed by RuvA-RuvB allows RuvC to scan DNA until it finds its consensus sequence, where it cleaves and resolves the cruciform DNA. The sequence is that of Crossover junction endodeoxyribonuclease RuvC from Hahella chejuensis (strain KCTC 2396).